We begin with the raw amino-acid sequence, 426 residues long: Testicular acid phosphatase (426 aa).

The first 26 residues, 1–26, serve as a signal peptide directing secretion; it reads MAGLGFWGHPAGPLLLLLLLVLPPRA. Topologically, residues 27–393 are extracellular; the sequence is LPEGPLVFVA…AAIPPAPVVP (367 aa). His41 acts as the Nucleophile in catalysis. 3 disulfides stabilise this stretch: Cys159–Cys378, Cys214–Cys312, and Cys353–Cys357. Asn191 and Asn269 each carry an N-linked (GlcNAc...) asparagine glycan. Asp289 acts as the Proton donor in catalysis. 2 N-linked (GlcNAc...) asparagine glycosylation sites follow: Asn330 and Asn339. Residues 394-414 traverse the membrane as a helical segment; it reads LLAGAVAVLVALSLGLGLLAW. The Cytoplasmic portion of the chain corresponds to 415–426; sequence RPGCLRALGGPV.

Belongs to the histidine acid phosphatase family. Homodimer. Glycosylated. Expressed mainly in the testis. Also expressed in the brain where they are enriched at the postsynaptic sites. Expressed at lower levels in the trachea, prostate, bone marrow, spinal cord, colon, fetal brain, heart, thymus, fetal liver, spleen, leukocytes, ovary, small intestine, pancreas and skeletal muscle. Expression is significantly lower in testicular cancer tissues than in normal testicular tissues. Isoform 3 is expressed in the testis, trachea, prostate and bone marrow.

It localises to the membrane. The catalysed reaction is a phosphate monoester + H2O = an alcohol + phosphate. Functionally, may dephosphorylate receptor tyrosine-protein kinase ERBB4 and inhibits its ligand-induced proteolytic cleavage. May play a role in odontogenesis. The polypeptide is Testicular acid phosphatase (Homo sapiens (Human)).